The sequence spans 457 residues: Putative F-box protein At3g58860 (457 aa).

One can recognise an F-box domain in the interval M6–S54.

The polypeptide is Putative F-box protein At3g58860 (Arabidopsis thaliana (Mouse-ear cress)).